We begin with the raw amino-acid sequence, 453 residues long: GTPase Der (453 aa).

EngA-type G domains follow at residues 4-169 (PIVA…PPAD) and 178-353 (IGVA…EQHR). GTP contacts are provided by residues 10–17 (GRPNVGKS), 57–61 (DTGGL), 120–123 (NKCE), 184–191 (GRPNVGKS), 231–235 (DTAGI), and 296–299 (NKWD). Residues 354–439 (RRVGTSVINE…PIRLFWRGKK (86 aa)) form the KH-like domain.

The protein belongs to the TRAFAC class TrmE-Era-EngA-EngB-Septin-like GTPase superfamily. EngA (Der) GTPase family. In terms of assembly, associates with the 50S ribosomal subunit.

Its function is as follows. GTPase that plays an essential role in the late steps of ribosome biogenesis. This chain is GTPase Der, found in Synechococcus sp. (strain ATCC 27144 / PCC 6301 / SAUG 1402/1) (Anacystis nidulans).